We begin with the raw amino-acid sequence, 187 residues long: Auxin-binding protein T85 (187 aa).

Residues 1-20 form the signal peptide; that stretch reads MARHVLVVVAVLLFATAEAS. Cys22 and Cys177 are oxidised to a cystine. Zn(2+) contacts are provided by His78, His80, and Glu84. N-linked (GlcNAc...) asparagine glycosylation occurs at Asn117. Position 128 (His128) interacts with Zn(2+). Positions 184 to 187 match the Prevents secretion from ER motif; that stretch reads KDEL.

As to quaternary structure, homodimer.

It localises to the endoplasmic reticulum lumen. In terms of biological role, this is probably a receptor for the plant hormone auxin. This Nicotiana tabacum (Common tobacco) protein is Auxin-binding protein T85 (T85).